We begin with the raw amino-acid sequence, 180 residues long: Large ribosomal subunit protein mL41 (180 aa).

A mitochondrion-targeting transit peptide spans Met-1–Ala-21.

Belongs to the mitochondrion-specific ribosomal protein mL41 family. As to quaternary structure, component of the mitochondrial ribosome large subunit (39S) which comprises a 16S rRNA and about 50 distinct proteins.

The protein resides in the mitochondrion. The protein is Large ribosomal subunit protein mL41 (mrpl-41) of Caenorhabditis elegans.